The chain runs to 698 residues: Polyribonucleotide nucleotidyltransferase (698 aa).

Residues D490 and D496 each coordinate Mg(2+). A KH domain is found at 557-616 (PKVVTMTIKPDKIRDVIGPGGKKINEIIDETGVKLDIEQDGTIFIGAVDQAMINRAREII). Residues 626–694 (GQTYQATVKR…KQGRVNASHR (69 aa)) form the S1 motif domain.

This sequence belongs to the polyribonucleotide nucleotidyltransferase family. Requires Mg(2+) as cofactor.

The protein resides in the cytoplasm. It carries out the reaction RNA(n+1) + phosphate = RNA(n) + a ribonucleoside 5'-diphosphate. Involved in mRNA degradation. Catalyzes the phosphorolysis of single-stranded polyribonucleotides processively in the 3'- to 5'-direction. This chain is Polyribonucleotide nucleotidyltransferase, found in Staphylococcus aureus (strain MRSA252).